Here is a 235-residue protein sequence, read N- to C-terminus: Phosphoribosylaminoimidazole-succinocarboxamide synthase (235 aa).

This sequence belongs to the SAICAR synthetase family.

It catalyses the reaction 5-amino-1-(5-phospho-D-ribosyl)imidazole-4-carboxylate + L-aspartate + ATP = (2S)-2-[5-amino-1-(5-phospho-beta-D-ribosyl)imidazole-4-carboxamido]succinate + ADP + phosphate + 2 H(+). Its pathway is purine metabolism; IMP biosynthesis via de novo pathway; 5-amino-1-(5-phospho-D-ribosyl)imidazole-4-carboxamide from 5-amino-1-(5-phospho-D-ribosyl)imidazole-4-carboxylate: step 1/2. The protein is Phosphoribosylaminoimidazole-succinocarboxamide synthase of Streptococcus pneumoniae serotype 2 (strain D39 / NCTC 7466).